We begin with the raw amino-acid sequence, 321 residues long: MSDYQMFEVQVSQVEPLTEQVKRFTLVATDGKPLPAFTGGSHVIVQMSDGDNQYSNAYSLLSSPHDTSCYQIAVRLEENSRGGSRFLHQQVKVGDRLTISTPNNLFALIPSARKHLFIAGGIGITPFLSHMAELQHSDVDWQLHYCSRNPESCAFRDELVQHPQAEKVHLHHSSTGTRLELARLLADIEPGTHVYTCGPEALIEAVRSEAARLDIAADTLHFEQFAIEDKTGDAFTLVLARSGKEFVVPEEMTILQVIENNKAAKVECLCREGVCGTCETAILEGEADHRDQYFSDEERASQQSMLICCSRAKGKRLVLDL.

In terms of domain architecture, FAD-binding FR-type spans Y4–I109. Residues D233 to L321 form the 2Fe-2S ferredoxin-type domain. Residues C270, C275, C278, and C308 each coordinate [2Fe-2S] cluster.

Belongs to the PDR/VanB family. CntB subfamily. As to quaternary structure, composed of an oxygenase subunit (yeaW) and a reductase subunit (yeaX). Requires FMN as cofactor. [2Fe-2S] cluster serves as cofactor.

The enzyme catalyses (R)-carnitine + NADH + O2 + H(+) = (3R)-3-hydroxy-4-oxobutanoate + trimethylamine + NAD(+) + H2O. It carries out the reaction (R)-carnitine + NADPH + O2 + H(+) = (3R)-3-hydroxy-4-oxobutanoate + trimethylamine + NADP(+) + H2O. The protein operates within amine and polyamine metabolism; carnitine metabolism. Functionally, converts carnitine to trimethylamine and malic semialdehyde. Can also use gamma-butyrobetaine, choline and betaine as substrates. The protein is Carnitine monooxygenase reductase subunit (yeaX) of Escherichia coli (strain K12).